The primary structure comprises 2376 residues: MAG2-interacting protein 2 (2376 aa).

In terms of assembly, forms a complex with MAG2, ZW10/MIP1 and MIP3 on the endoplasmic reticulum.

The protein resides in the endoplasmic reticulum membrane. Required for proper maturation of seed storage proteins. Forms a complex with MAG2, ZW10/MIP1 and MIP3 on the endoplasmic reticulum that may be responsible for efficient transport of seed storage proteins. The sequence is that of MAG2-interacting protein 2 from Arabidopsis thaliana (Mouse-ear cress).